We begin with the raw amino-acid sequence, 438 residues long: Serine--tRNA ligase (438 aa).

Residue 245–247 coordinates L-serine; sequence TSE. 276–278 lines the ATP pocket; that stretch reads RSE. Residue Glu-299 participates in L-serine binding. 363-366 contributes to the ATP binding site; sequence EISS. Ser-398 provides a ligand contact to L-serine.

This sequence belongs to the class-II aminoacyl-tRNA synthetase family. Type-1 seryl-tRNA synthetase subfamily. Homodimer. The tRNA molecule binds across the dimer.

The protein resides in the cytoplasm. The enzyme catalyses tRNA(Ser) + L-serine + ATP = L-seryl-tRNA(Ser) + AMP + diphosphate + H(+). The catalysed reaction is tRNA(Sec) + L-serine + ATP = L-seryl-tRNA(Sec) + AMP + diphosphate + H(+). It functions in the pathway aminoacyl-tRNA biosynthesis; selenocysteinyl-tRNA(Sec) biosynthesis; L-seryl-tRNA(Sec) from L-serine and tRNA(Sec): step 1/1. In terms of biological role, catalyzes the attachment of serine to tRNA(Ser). Is also able to aminoacylate tRNA(Sec) with serine, to form the misacylated tRNA L-seryl-tRNA(Sec), which will be further converted into selenocysteinyl-tRNA(Sec). In Verminephrobacter eiseniae (strain EF01-2), this protein is Serine--tRNA ligase.